The chain runs to 338 residues: Methionine import ATP-binding protein MetN 2 (338 aa).

The ABC transporter domain maps to 2–242 (IEIEKVCVDF…PQHAFTQQLV (241 aa)). 39 to 46 (GTSGAGKS) lines the ATP pocket.

It belongs to the ABC transporter superfamily. Methionine importer (TC 3.A.1.24) family. The complex is composed of two ATP-binding proteins (MetN), two transmembrane proteins (MetI) and a solute-binding protein (MetQ).

It is found in the cell inner membrane. It carries out the reaction L-methionine(out) + ATP + H2O = L-methionine(in) + ADP + phosphate + H(+). The catalysed reaction is D-methionine(out) + ATP + H2O = D-methionine(in) + ADP + phosphate + H(+). In terms of biological role, part of the ABC transporter complex MetNIQ involved in methionine import. Responsible for energy coupling to the transport system. The sequence is that of Methionine import ATP-binding protein MetN 2 from Salmonella typhi.